We begin with the raw amino-acid sequence, 702 residues long: DnaJ homolog subfamily C member 14 (702 aa).

Disordered regions lie at residues 1–148 (MAQK…GGNG) and 165–229 (DELE…KRSQ). Residues 75–84 (HGPPGGPGPP) show a composition bias toward pro residues. A compositionally biased stretch (acidic residues) spans 88 to 103 (EDPDQSETSSEEESGV). The segment covering 113–133 (TGNQKDGNSFLSIPSACNCQG) has biased composition (polar residues). The span at 165 to 175 (DELEEEYDDEE) shows a compositional bias: acidic residues. Residues 192–201 (PPSRRQRHRF) are compositionally biased toward basic residues. Over residues 202-217 (PTKEDTREGGRRDPRS) the composition is skewed to basic and acidic residues. Over residues 218–227 (PGRHRLGRKR) the composition is skewed to basic residues. 3 consecutive transmembrane segments (helical) span residues 250–270 (AGFWWLIELLVLVGEYVETCG), 300–320 (GWAQVMFQFLSQGFYCGVGLF), and 326–346 (LLGALLLLALALFLGFLQLGW). Positions 443-507 (NPFHVLGVEA…EKRKEYEMKR (65 aa)) constitute a J domain. Positions 658–702 (MPNGNFFAAPQPAPGAAAASKPNSTVPKGEAKPKRRKKVRRPFQR) are disordered. Residues 659 to 676 (PNGNFFAAPQPAPGAAAA) show a composition bias toward low complexity. A compositionally biased stretch (basic residues) spans 690–702 (PKRRKKVRRPFQR).

As to quaternary structure, interacts with the FxxxFxxxF motif of DRD1 via its C-terminal domain. As to expression, highly expressed in pancreas and selectively expressed in brain, lung, liver, skeletal muscle and kidney.

Its subcellular location is the endoplasmic reticulum membrane. Its function is as follows. Regulates the export of target proteins, such as DRD1, from the endoplasmic reticulum to the cell surface. This Homo sapiens (Human) protein is DnaJ homolog subfamily C member 14 (DNAJC14).